We begin with the raw amino-acid sequence, 196 residues long: Segregation and condensation protein B (196 aa).

It belongs to the ScpB family. Homodimer. Homodimerization may be required to stabilize the binding of ScpA to the Smc head domains. Component of a cohesin-like complex composed of ScpA, ScpB and the Smc homodimer, in which ScpA and ScpB bind to the head domain of Smc. The presence of the three proteins is required for the association of the complex with DNA.

The protein resides in the cytoplasm. Participates in chromosomal partition during cell division. May act via the formation of a condensin-like complex containing Smc and ScpA that pull DNA away from mid-cell into both cell halves. The polypeptide is Segregation and condensation protein B (Pediococcus pentosaceus (strain ATCC 25745 / CCUG 21536 / LMG 10740 / 183-1w)).